Reading from the N-terminus, the 375-residue chain is Putative disease resistance protein At3g15700 (375 aa).

A coiled-coil region spans residues 17 to 49 (KENDNVKKLKTATEELKDLRNIVMKRVKMYEDQ). Residues 158–372 (DNTGIIGLYG…LSTSPPNFSG (215 aa)) enclose the NB-ARC domain. 167–174 (GVEGVGKT) contacts ATP.

Potential disease resistance protein. The polypeptide is Putative disease resistance protein At3g15700 (Arabidopsis thaliana (Mouse-ear cress)).